The following is a 133-amino-acid chain: Small ribosomal subunit protein uS8 (133 aa).

Belongs to the universal ribosomal protein uS8 family. In terms of assembly, part of the 30S ribosomal subunit. Contacts proteins S5 and S12.

Its function is as follows. One of the primary rRNA binding proteins, it binds directly to 16S rRNA central domain where it helps coordinate assembly of the platform of the 30S subunit. The sequence is that of Small ribosomal subunit protein uS8 from Acaryochloris marina (strain MBIC 11017).